The sequence spans 2321 residues: Major viral transcription factor ICP4 homolog (2321 aa).

Disordered stretches follow at residues G19 to L183, I296 to I329, E350 to G438, M954 to A1180, D1360 to H1392, L1597 to Y1841, and Q2277 to D2321. The span at S114–Y147 shows a compositional bias: low complexity. Composition is skewed to pro residues over residues P302–I329 and Q355–P367. Residues A368 to L389 are compositionally biased toward low complexity. Over residues S390–S410 the composition is skewed to pro residues. Composition is skewed to polar residues over residues S424 to P433 and P1002 to R1011. The segment covering P1031–P1093 has biased composition (low complexity). Basic residues predominate over residues G1151–K1161. Polar residues-rich tracts occupy residues N1169–A1180 and S1371–A1389. The segment covering S1630 to K1644 has biased composition (low complexity). 2 stretches are compositionally biased toward polar residues: residues K1720–S1743 and V1801–L1816. A compositionally biased stretch (low complexity) spans S1817 to S1839.

This sequence belongs to the herpesviridae ICP4 family. Post-translationally, a long stretch of serine residues may be a major site of phosphorylation.

It is found in the host nucleus. Functionally, this IE protein is a multifunctional protein capable of migrating to the nucleus, binding to DNA, trans-activating other viral genes, and autoregulating its own synthesis. It is required for the switch from immediate-early to early mode of gene expression. The protein is Major viral transcription factor ICP4 homolog (MDV084) of Gallus gallus (Chicken).